The primary structure comprises 546 residues: Zinc metalloproteinase nas-9 (546 aa).

Residues 1 to 14 (MIFLLFVVFPFVYA) form the signal peptide. Residues 15–300 (QLLPELLAGF…GGGGGGRVPR (286 aa)) constitute a propeptide that is removed on maturation. N248 carries an N-linked (GlcNAc...) asparagine glycan. Positions 308 to 507 (SAVQKWDIWK…IRLLKKMYCR (200 aa)) constitute a Peptidase M12A domain. 5 disulfides stabilise this stretch: C347–C506, C372–C392, C510–C546, C517–C539, and C526–C543. Residue H401 participates in Zn(2+) binding. The active site involves E402. H405 and H411 together coordinate Zn(2+). In terms of domain architecture, ShKT spans 510-546 (CDDQNVHCGTWALHGYCKMKEQMKWMNENCKASCDKC).

Requires Zn(2+) as cofactor. As to expression, expressed in hypodermis, uterus and spermatheca.

It localises to the secreted. Its function is as follows. Metalloprotease. This Caenorhabditis elegans protein is Zinc metalloproteinase nas-9 (nas-9).